A 270-amino-acid polypeptide reads, in one-letter code: MAILSRLLTTVTLGSLLTSAVAQSSGCGKQPTLTNGVQNINGREYILNIPEGYDSSKQYKLIFGLHWLGGSMNDVVSGNSIEPWYGLESRAEGSAIFVAPNGLNAGWANNGGEDTALMDAIIEAVEADLCIDQSSRFATGFSFGGGMSYALACARASKFRAVSVLSGGVISGCDGGNDPIAYLGIHGINDPVLPIDGGIEMANKFVQNNGCQSADVGRPNSGSGQSVRTDFQGCSRPVSFIAYDGGHEGAPLGVGNPLAPDATWEFFTGA.

The first 22 residues, 1–22 (MAILSRLLTTVTLGSLLTSAVA), serve as a signal peptide directing secretion.

This sequence belongs to the faeC family.

The protein resides in the secreted. It carries out the reaction feruloyl-polysaccharide + H2O = ferulate + polysaccharide.. Functionally, involved in degradation of plant cell walls. Hydrolyzes the feruloyl-arabinose ester bond in arabinoxylans, and the feruloyl-galactose ester bond in pectin. Active against paranitrophenyl-acetate, methyl ferulate and wheat arabinoxylan. The polypeptide is Probable feruloyl esterase C (faeC) (Aspergillus terreus (strain NIH 2624 / FGSC A1156)).